Reading from the N-terminus, the 110-residue chain is MSEEKPKEGVKTENDHINLKVAGQDGSVVQFKIKRHTPLSKLMKAYCERQGLSMRQIRFRFDGQPINETDTPAQLEMEDEDTIDVFQQQTGGTASRASVPTPSHFPDICY.

Glycyl lysine isopeptide (Lys-Gly) (interchain with G-Cter in SUMO2) cross-links involve residues Lys-5 and Lys-7. Residue Lys-11 forms a Glycyl lysine isopeptide (Lys-Gly) (interchain with G-Cter in SUMO); alternate linkage. A Glycyl lysine isopeptide (Lys-Gly) (interchain with G-Cter in SUMO2); alternate cross-link involves residue Lys-11. A Ubiquitin-like domain is found at Asp-15 to Gly-92. The segment covering Gln-89–Thr-101 has biased composition (polar residues). Positions Gln-89–Tyr-110 are disordered. Gly-92 is covalently cross-linked (Glycyl lysine isopeptide (Gly-Lys) (interchain with K-? in acceptor proteins)). The propeptide occupies Thr-93–Tyr-110.

This sequence belongs to the ubiquitin family. SUMO subfamily. As to quaternary structure, interacts with SAE2 and UBE2I. Covalently attached to a number of proteins. Interacts with USP25 (via ts SIM domain); the interaction sumoylates USP25 and inhibits its ubiquitin hydrolyzing activity. Interacts with BMAL1. Polymeric chains can be formed through Lys-11 cross-linking. Post-translationally, cleavage of precursor form by SENP1, SENP2 or SENP5 is necessary for function.

It is found in the cytoplasm. Its subcellular location is the nucleus. It localises to the PML body. Its function is as follows. Ubiquitin-like protein which can be covalently attached to target lysines either as a monomer or as a lysine-linked polymer. Does not seem to be involved in protein degradation and may function as an antagonist of ubiquitin in the degradation process. Plays a role in a number of cellular processes such as nuclear transport, DNA replication and repair, mitosis and signal transduction. Covalent attachment to its substrates requires prior activation by the E1 complex SAE1-SAE2 and linkage to the E2 enzyme UBE2I, and can be promoted by an E3 ligase such as PIAS1-4, RANBP2 or CBX4. Plays a role in the regulation of sumoylation status of SETX. This chain is Small ubiquitin-related modifier 3 (Sumo3), found in Rattus norvegicus (Rat).